A 270-amino-acid chain; its full sequence is Endochitinase PR4 (270 aa).

Positions 1–23 are cleaved as a signal peptide; it reads MGNKLVLVLVAVALVMGPKNVSA. A Chitin-binding type-1 domain is found at 24–58; it reads QNCGCAEGLCCSQYGYCGTGEDYCGTGCQQGPCTT. 7 disulfides stabilise this stretch: Cys-26/Cys-34, Cys-28/Cys-40, Cys-33/Cys-47, Cys-51/Cys-56, Cys-88/Cys-137, Cys-150/Cys-160, and Cys-238/Cys-270. Glu-132 serves as the catalytic Proton donor.

Belongs to the glycosyl hydrolase 19 family. Chitinase class I subfamily.

It carries out the reaction Random endo-hydrolysis of N-acetyl-beta-D-glucosaminide (1-&gt;4)-beta-linkages in chitin and chitodextrins.. Its function is as follows. Defense against chitin-containing fungal pathogens. The protein is Endochitinase PR4 (CHI4) of Phaseolus vulgaris (Kidney bean).